Consider the following 642-residue polypeptide: Tigger transposable element-derived protein 5 (642 aa).

Pro residues-rich tracts occupy residues 1-10 (MYPAGPPAGP) and 19-43 (LPGP…PGPR). Residues 1–45 (MYPAGPPAGPVPRRGRRPLPGPPAPAPAPVPAARPPPPAPGPRPR) form a disordered region. One can recognise an HTH psq-type domain in the interval 47–98 (AVKMAFRKAYSIKDKLQAIERVKGGERQASVCRDFGVPGGTLRGWLKDEPKL). DNA-binding regions (H-T-H motif) lie at residues 74–94 (QASV…WLKD) and 145–178 (PLIQ…WQKR). Residues 112-185 (QRKKMRLANE…QKRHGISSQR (74 aa)) form the HTH CENPB-type domain. The disordered stretch occupies residues 185–233 (RFYGEAGPPAPSPAPGPPVKEEPALPSGAGPLPDRAPAPPPPAEGGYGD). Composition is skewed to pro residues over residues 192–202 (PPAPSPAPGPP) and 218–227 (DRAPAPPPPA). 2 DDE-1 domains span residues 233–357 (DEQI…VLLV) and 410–477 (RAHI…ERCW). A disordered region spans residues 535–587 (LDDDGGPPEGCREEVGPALPPAAPPAPASLPSAMGGGEDEEEATDYGGTSVPT). The segment covering 552 to 562 (ALPPAAPPAPA) has biased composition (pro residues).

Belongs to the tigger transposable element derived protein family.

It is found in the nucleus. In Homo sapiens (Human), this protein is Tigger transposable element-derived protein 5 (TIGD5).